Consider the following 690-residue polypeptide: Elongation factor G (690 aa).

A tr-type G domain is found at 8–283 (EDYRNFGIMA…AVVDYLPSPV (276 aa)). GTP is bound by residues 17-24 (AHIDAGKT), 81-85 (DTPGH), and 135-138 (NKMD).

It belongs to the TRAFAC class translation factor GTPase superfamily. Classic translation factor GTPase family. EF-G/EF-2 subfamily.

It localises to the cytoplasm. Catalyzes the GTP-dependent ribosomal translocation step during translation elongation. During this step, the ribosome changes from the pre-translocational (PRE) to the post-translocational (POST) state as the newly formed A-site-bound peptidyl-tRNA and P-site-bound deacylated tRNA move to the P and E sites, respectively. Catalyzes the coordinated movement of the two tRNA molecules, the mRNA and conformational changes in the ribosome. This Rhodopseudomonas palustris (strain BisB18) protein is Elongation factor G.